The chain runs to 818 residues: Serine/threonine-protein kinase PTK2/STK2 (818 aa).

Polar residues predominate over residues 28–39 (NSSSHTDNSSLL). Disordered regions lie at residues 28-100 (NSSS…GSVS) and 117-177 (NPYL…SHHF). Threonine 56 is subject to Phosphothreonine. Residues 57–81 (SPSISGSGSGGNSPSSSAGARQRSA) show a composition bias toward low complexity. Phosphoserine is present on residues serine 59 and serine 80. Basic and acidic residues predominate over residues 136 to 160 (TRDRDRAVLDREKEKERARNKERNT). The Protein kinase domain maps to 255-562 (DTDNKPIGSG…MDDLFNDPFF (308 aa)). Residues 261–269 (IGSGGSSEV) and lysine 285 contribute to the ATP site. Aspartate 388 serves as the catalytic Proton acceptor. Residues 585-595 (STSTNDFSENS) are compositionally biased toward polar residues. The disordered stretch occupies residues 585 to 795 (STSTNDFSEN…SVSSSKKKKV (211 aa)). A phosphoserine mark is found at serine 623 and serine 632. 2 stretches are compositionally biased toward basic and acidic residues: residues 638-651 (KVKD…HDVG) and 659-685 (TKPK…KVIE). Serine 694 is modified (phosphoserine). Residue threonine 700 is modified to Phosphothreonine. Serine 711 is subject to Phosphoserine. Low complexity predominate over residues 727-736 (TPTTPTHNGP). Threonine 737 carries the phosphothreonine modification. 4 positions are modified to phosphoserine: serine 752, serine 755, serine 778, and serine 781. Polar residues predominate over residues 755-767 (SLKSETPASTKNF). A compositionally biased stretch (low complexity) spans 768–789 (SAPNVSSSSNSLRSLGSPSVSS).

It belongs to the protein kinase superfamily. Ser/Thr protein kinase family.

It localises to the nucleus. The protein resides in the cytoplasm. It catalyses the reaction L-seryl-[protein] + ATP = O-phospho-L-seryl-[protein] + ADP + H(+). It carries out the reaction L-threonyl-[protein] + ATP = O-phospho-L-threonyl-[protein] + ADP + H(+). In terms of biological role, essential determinant for high-affinity spermidine transport. Required for the activation of the plasma membrane proton pump PMA1 via phosphorylation of 'Ser-899'. The polypeptide is Serine/threonine-protein kinase PTK2/STK2 (PTK2) (Saccharomyces cerevisiae (strain ATCC 204508 / S288c) (Baker's yeast)).